The primary structure comprises 456 residues: Probable flavin-containing monoamine oxidase A (456 aa).

An S-8alpha-FAD cysteine modification is found at Cys394.

It belongs to the flavin monoamine oxidase family. FAD serves as cofactor.

It carries out the reaction a secondary aliphatic amine + O2 + H2O = a primary amine + an aldehyde + H2O2. In Dictyostelium discoideum (Social amoeba), this protein is Probable flavin-containing monoamine oxidase A (maoA).